A 1005-amino-acid polypeptide reads, in one-letter code: Pikachurin (1005 aa).

A signal peptide spans 1–24 (MDLISTFLLHFLLLACSLPPGAVS). Fibronectin type-III domains follow at residues 37-136 (PPLD…TLSQ) and 144-239 (APHQ…TLGP). N-linked (GlcNAc...) asparagine glycosylation occurs at asparagine 47. Positions 281–328 (PATKVGNKKSKKTSVSNSEMDSRLAQPTSASLPETTVAVPPTPAQRKG) are disordered. Residues 305-314 (AQPTSASLPE) are compositionally biased toward polar residues. The EGF-like 1 domain occupies 339-377 (FDMSCDETLCSADSFCVNDYAWGGSRCHCNLGKGGEACS). Cystine bridges form between cysteine 343-cysteine 354, cysteine 348-cysteine 365, cysteine 367-cysteine 376, cysteine 530-cysteine 560, cysteine 565-cysteine 576, cysteine 570-cysteine 586, cysteine 588-cysteine 597, cysteine 784-cysteine 795, cysteine 789-cysteine 804, cysteine 806-cysteine 815, and cysteine 975-cysteine 1002. The Laminin G-like 1 domain maps to 382-560 (IQYPQFFGHS…ALNGADVGEC (179 aa)). 2 consecutive EGF-like domains span residues 561-598 (SSGI…RHCE) and 780-816 (AAHP…LNCQ). The Laminin G-like 2 domain maps to 605-784 (IPQFRESLRS…VNVENAAHPC (180 aa)). The Laminin G-like 3 domain maps to 823 to 1002 (IEIPQFIGRS…AVDGKNINTC (180 aa)).

As to quaternary structure, interacts with DAG1 alpha-dystroglycan. Interacts with GPR158 and GPR179; transsynaptic interaction is required for synaptic organization of photoreceptor cells. Post-translationally, O-glycosylated; contains chondroitin sulfate and heparan sulfate.

It localises to the secreted. Its subcellular location is the extracellular space. The protein localises to the extracellular matrix. It is found in the synaptic cleft. The protein resides in the presynaptic active zone. In terms of biological role, involved in both the retinal photoreceptor ribbon synapse formation and physiological functions of visual perception. Plays a key role in the synaptic organization of photoreceptors by mediating transsynaptic interaction between alpha-dystroglycan and GPR179 on the postsynaptic membrane. Necessary for proper bipolar dendritic tip apposition to the photoreceptor ribbon synapse. Promotes matrix assembly and cell adhesiveness. This chain is Pikachurin (Egflam), found in Rattus norvegicus (Rat).